We begin with the raw amino-acid sequence, 156 residues long: Ribosomal RNA large subunit methyltransferase H (156 aa).

S-adenosyl-L-methionine-binding positions include L72, G104, and 123–128 (FGKMVW).

Belongs to the RNA methyltransferase RlmH family. In terms of assembly, homodimer.

The protein localises to the cytoplasm. The enzyme catalyses pseudouridine(1915) in 23S rRNA + S-adenosyl-L-methionine = N(3)-methylpseudouridine(1915) in 23S rRNA + S-adenosyl-L-homocysteine + H(+). Its function is as follows. Specifically methylates the pseudouridine at position 1915 (m3Psi1915) in 23S rRNA. The sequence is that of Ribosomal RNA large subunit methyltransferase H from Ruegeria sp. (strain TM1040) (Silicibacter sp.).